A 78-amino-acid chain; its full sequence is Acyl carrier protein (78 aa).

In terms of domain architecture, Carrier spans 2–77 (SDIAERVKKI…DAIKFLEKNA (76 aa)). S37 is modified (O-(pantetheine 4'-phosphoryl)serine).

This sequence belongs to the acyl carrier protein (ACP) family. Post-translationally, 4'-phosphopantetheine is transferred from CoA to a specific serine of apo-ACP by AcpS. This modification is essential for activity because fatty acids are bound in thioester linkage to the sulfhydryl of the prosthetic group.

The protein localises to the cytoplasm. Its pathway is lipid metabolism; fatty acid biosynthesis. Carrier of the growing fatty acid chain in fatty acid biosynthesis. In Xanthobacter autotrophicus (strain ATCC BAA-1158 / Py2), this protein is Acyl carrier protein.